Reading from the N-terminus, the 55-residue chain is Large ribosomal subunit protein bL33A (55 aa).

Belongs to the bacterial ribosomal protein bL33 family.

The protein is Large ribosomal subunit protein bL33A of Rhodococcus jostii (strain RHA1).